The sequence spans 150 residues: UPF0756 membrane protein CGSHiEE_06715 (150 aa).

4 helical membrane passes run 1–21 (MTLQ…LGVL), 52–72 (YGVK…LVSG), 81–101 (GFVS…AWLA), and 123–143 (IIGV…AGIL).

It belongs to the UPF0756 family.

The protein localises to the cell membrane. This Haemophilus influenzae (strain PittEE) protein is UPF0756 membrane protein CGSHiEE_06715.